The primary structure comprises 400 residues: Coiled-coil domain-containing glutamate-rich protein 1 (400 aa).

The segment covering 1–11 has biased composition (basic and acidic residues); the sequence is MTQTVNEREDP. Disordered stretches follow at residues 1–68, 134–164, and 203–353; these read MTQT…IPGP, RPPGRKKRWGRRGRGLRRHPRRSFPRNPPID, and QEKL…DKFL. Basic residues predominate over residues 31–45; that stretch reads YHRRQRGAPMSKRRY. The segment covering 46-57 has biased composition (basic and acidic residues); the sequence is RDGPKTEYEAPR. A compositionally biased stretch (basic residues) spans 137–157; that stretch reads GRKKRWGRRGRGLRRHPRRSF. Residues 209-220 are compositionally biased toward low complexity; it reads QQAALRAHQAQA. A compositionally biased stretch (polar residues) spans 255–271; the sequence is PSLTFSPAPGQQNQSPT. The segment covering 275–347 has biased composition (acidic residues); sequence VEEEEKNVDD…EAGLEEGEQR (73 aa). A coiled-coil region spans residues 299–335; that stretch reads EEEEVDGESEDEDVDEEEVEEAGNGEEREEDQEEEDV.

The protein localises to the nucleus. In terms of biological role, regulator of histone epigenetic modifications and chromatin compaction into the sperm head, required for histone-to-protamine (HTP) transition. HTP is a key event in which somatic histones are first replaced by testis-specific histone variants, then transition proteins (TNPs) are incorporated into the spermatid nucleus, and finally protamines (PRMs) replace the TNPs to promote chromatin condensation. The protein is Coiled-coil domain-containing glutamate-rich protein 1 (Ccer1) of Rattus norvegicus (Rat).